The chain runs to 239 residues: 7-cyano-7-deazaguanine synthase (239 aa).

7–17 (LSGGIDSSTLL) provides a ligand contact to ATP. Residues C184, C192, C195, and C198 each contribute to the Zn(2+) site.

It belongs to the QueC family. It depends on Zn(2+) as a cofactor.

The enzyme catalyses 7-carboxy-7-deazaguanine + NH4(+) + ATP = 7-cyano-7-deazaguanine + ADP + phosphate + H2O + H(+). It functions in the pathway purine metabolism; 7-cyano-7-deazaguanine biosynthesis. Functionally, catalyzes the ATP-dependent conversion of 7-carboxy-7-deazaguanine (CDG) to 7-cyano-7-deazaguanine (preQ(0)). The protein is 7-cyano-7-deazaguanine synthase of Archaeoglobus fulgidus (strain ATCC 49558 / DSM 4304 / JCM 9628 / NBRC 100126 / VC-16).